A 180-amino-acid polypeptide reads, in one-letter code: HTH-type transcriptional regulator EcpR (180 aa).

The region spanning 122 to 180 is the HTH luxR-type domain; the sequence is KDIKKDKITDREMKIIRMTAQGMQPKSIARIENCSVKTVYTHRRNAEAKLYSKIYKLVQ. Residues 146–165 constitute a DNA-binding region (H-T-H motif); that stretch reads PKSIARIENCSVKTVYTHRR.

Belongs to the EcpR/MatA family.

Its subcellular location is the cytoplasm. Functionally, part of the ecpRABCDE operon, which encodes the E.coli common pilus (ECP). ECP plays a dual role in early-stage biofilm development and host cell recognition. Positively regulates the expression of the ecp operon. The protein is HTH-type transcriptional regulator EcpR (ecpR) of Klebsiella pneumoniae (strain 342).